The chain runs to 178 residues: Interleukin-10 (178 aa).

The signal sequence occupies residues 1–18; sequence MHSSALLCCLVLLTGVRA. 2 disulfides stabilise this stretch: Cys-30–Cys-126 and Cys-80–Cys-132. The N-linked (GlcNAc...) asparagine glycan is linked to Asn-134.

It belongs to the IL-10 family. As to quaternary structure, homodimer. Interacts with IL10RA and IL10RB. In terms of tissue distribution, produced by a variety of cell lines, including T-cells, macrophages, mast cells and other cell types.

It localises to the secreted. Its function is as follows. Major immune regulatory cytokine that acts on many cells of the immune system where it has profound anti-inflammatory functions, limiting excessive tissue disruption caused by inflammation. Mechanistically, IL10 binds to its heterotetrameric receptor comprising IL10RA and IL10RB leading to JAK1 and STAT2-mediated phosphorylation of STAT3. In turn, STAT3 translocates to the nucleus where it drives expression of anti-inflammatory mediators. Targets antigen-presenting cells (APCs) such as macrophages and monocytes and inhibits their release of pro-inflammatory cytokines including granulocyte-macrophage colony-stimulating factor /GM-CSF, granulocyte colony-stimulating factor/G-CSF, IL-1 alpha, IL-1 beta, IL-6, IL-8 and TNF-alpha. Also interferes with antigen presentation by reducing the expression of MHC-class II and co-stimulatory molecules, thereby inhibiting their ability to induce T cell activation. In addition, controls the inflammatory response of macrophages by reprogramming essential metabolic pathways including mTOR signaling. This chain is Interleukin-10 (IL10), found in Homo sapiens (Human).